Reading from the N-terminus, the 395-residue chain is MAKKTIRDIDWSGKRALVRVDFNVPLENGQITDDTRIRAALPTIRYLLEHGAAVILMSHLGRPKNKVVESMRLAPVVARLAELLPEAKAIKGTQATTGPAAEAAAQDLKPGEVLVLENTRFDPREEANDESMARELAKLGDVYVNDAFGSAHRAHASTEGVARFLPAVAGFLMEAELAALQGALENPTRPFVTIIGGAKISDKIGVIENLLGKVDALLIGGGMANTFLLAQGYEMGDSLVEPDSVPVAKDLLEKAASRGVRFMLPTDVVIADAFSADANRRVVSVGDIPPGWRVLDIGPETVRAYTEIITTAQTVIWNGPMGVFELAPFAEGTRAIAQAMANCPGMTIVGGGDSVAAVEQMGLADKIRHISTGGGASLELLEGRILPGVAALNDA.

Substrate contacts are provided by residues 21–23 (DFN), arginine 36, 59–62 (HLGR), arginine 120, and arginine 153. Residues lysine 203, glutamate 325, and 351–354 (GGDS) contribute to the ATP site.

Belongs to the phosphoglycerate kinase family. As to quaternary structure, monomer.

The protein localises to the cytoplasm. It catalyses the reaction (2R)-3-phosphoglycerate + ATP = (2R)-3-phospho-glyceroyl phosphate + ADP. The protein operates within carbohydrate degradation; glycolysis; pyruvate from D-glyceraldehyde 3-phosphate: step 2/5. The polypeptide is Phosphoglycerate kinase (Roseiflexus sp. (strain RS-1)).